The chain runs to 103 residues: Defensin-like protein 289 (103 aa).

Residues 1 to 29 (MATLKTTIFIIFILYISCTMFVNIFRVQA) form the signal peptide. 6 cysteine pairs are disulfide-bonded: cysteine 33/cysteine 50, cysteine 39/cysteine 55, cysteine 43/cysteine 57, cysteine 72/cysteine 92, cysteine 78/cysteine 98, and cysteine 84/cysteine 100.

Belongs to the DEFL family.

It is found in the secreted. The protein is Defensin-like protein 289 of Arabidopsis thaliana (Mouse-ear cress).